A 540-amino-acid chain; its full sequence is Glucose-6-phosphate isomerase (540 aa).

Glu346 serves as the catalytic Proton donor. Residues His377 and Lys505 contribute to the active site.

This sequence belongs to the GPI family.

The protein localises to the cytoplasm. The catalysed reaction is alpha-D-glucose 6-phosphate = beta-D-fructose 6-phosphate. It functions in the pathway carbohydrate biosynthesis; gluconeogenesis. The protein operates within carbohydrate degradation; glycolysis; D-glyceraldehyde 3-phosphate and glycerone phosphate from D-glucose: step 2/4. Catalyzes the reversible isomerization of glucose-6-phosphate to fructose-6-phosphate. The sequence is that of Glucose-6-phosphate isomerase from Francisella tularensis subsp. mediasiatica (strain FSC147).